We begin with the raw amino-acid sequence, 284 residues long: Tropomyosin Per a 7.0102 (284 aa).

A coiled-coil region spans residues 1-266 (MDAIKKKMQA…EDELVHEKEK (266 aa)).

This sequence belongs to the tropomyosin family. In terms of assembly, homodimer. Expressed in striated skeletal muscle (at protein level).

Functionally, tropomyosin, in association with the troponin complex, plays a central role in the calcium dependent regulation of muscle contraction. The polypeptide is Tropomyosin Per a 7.0102 (Periplaneta americana (American cockroach)).